Consider the following 230-residue polypeptide: Demethylmenaquinone methyltransferase (230 aa).

S-adenosyl-L-methionine-binding positions include Thr57, Asp77, 101 to 102 (DI), and Ser118.

Belongs to the class I-like SAM-binding methyltransferase superfamily. MenG/UbiE family.

It carries out the reaction a 2-demethylmenaquinol + S-adenosyl-L-methionine = a menaquinol + S-adenosyl-L-homocysteine + H(+). Its pathway is quinol/quinone metabolism; menaquinone biosynthesis; menaquinol from 1,4-dihydroxy-2-naphthoate: step 2/2. Methyltransferase required for the conversion of demethylmenaquinol (DMKH2) to menaquinol (MKH2). The sequence is that of Demethylmenaquinone methyltransferase from Chlamydia felis (strain Fe/C-56) (Chlamydophila felis).